Here is a 287-residue protein sequence, read N- to C-terminus: Nuclease S1 (287 aa).

Positions 1-20 are cleaved as a signal peptide; the sequence is MPRLLPISAATLALAQLTYG. W21, H26, D65, and H80 together coordinate a divalent metal cation. Residues 21-26, 65-71, 80-83, and 93-98 contribute to the substrate site; these read WGNLGH, DTYKYTD, HFID, and GVDYDR. 2 disulfide bridges follow: C92/C236 and C100/C105. Residues N112 and N122 are each glycosylated (N-linked (GlcNAc...) asparagine). A divalent metal cation is bound by residues H135, D139, H145, H168, and D172. The segment at 135 to 183 is substrate binding; the sequence is HIIGDIHQPLHDENLEAGGNGIDVTYDGETTNLHHIWDTNMPEEAAGGY. N-linked (GlcNAc...) asparagine glycosylation is present at N248.

The protein belongs to the nuclease type I family. As to quaternary structure, monomer. It depends on Zn(2+) as a cofactor.

It catalyses the reaction Endonucleolytic cleavage to 5'-phosphomononucleotide and 5'-phosphooligonucleotide end-products.. Inhibited by inorganic phosphate (Pi). Hydrolyzes only single-stranded DNA and RNA without apparent specificity for bases. This Aspergillus oryzae (strain ATCC 42149 / RIB 40) (Yellow koji mold) protein is Nuclease S1.